The sequence spans 197 residues: 3-isopropylmalate dehydratase small subunit (197 aa).

Belongs to the LeuD family. LeuD type 1 subfamily. In terms of assembly, heterodimer of LeuC and LeuD.

The enzyme catalyses (2R,3S)-3-isopropylmalate = (2S)-2-isopropylmalate. Its pathway is amino-acid biosynthesis; L-leucine biosynthesis; L-leucine from 3-methyl-2-oxobutanoate: step 2/4. Functionally, catalyzes the isomerization between 2-isopropylmalate and 3-isopropylmalate, via the formation of 2-isopropylmaleate. The chain is 3-isopropylmalate dehydratase small subunit from Geobacillus kaustophilus (strain HTA426).